Consider the following 378-residue polypeptide: Chaperone protein DnaJ (378 aa).

In terms of domain architecture, J spans Asp5 to Gly70. The CR-type zinc-finger motif lies at Gly133 to Asn211. Cys146, Cys149, Cys163, Cys166, Cys185, Cys188, Cys199, and Cys202 together coordinate Zn(2+). 4 CXXCXGXG motif repeats span residues Cys146–Gly153, Cys163–Gly170, Cys185–Gly192, and Cys199–Gly206.

This sequence belongs to the DnaJ family. In terms of assembly, homodimer. Requires Zn(2+) as cofactor.

The protein resides in the cytoplasm. Functionally, participates actively in the response to hyperosmotic and heat shock by preventing the aggregation of stress-denatured proteins and by disaggregating proteins, also in an autonomous, DnaK-independent fashion. Unfolded proteins bind initially to DnaJ; upon interaction with the DnaJ-bound protein, DnaK hydrolyzes its bound ATP, resulting in the formation of a stable complex. GrpE releases ADP from DnaK; ATP binding to DnaK triggers the release of the substrate protein, thus completing the reaction cycle. Several rounds of ATP-dependent interactions between DnaJ, DnaK and GrpE are required for fully efficient folding. Also involved, together with DnaK and GrpE, in the DNA replication of plasmids through activation of initiation proteins. This Buchnera aphidicola subsp. Schizaphis graminum (strain Sg) protein is Chaperone protein DnaJ.